Consider the following 720-residue polypeptide: uncharacterized protein (720 aa).

G2 carries N-myristoyl glycine; by host lipidation.

This is an uncharacterized protein from Cryphonectria parasitica mycoreovirus 1 (strain 9B21) (CpMYRV-1).